Reading from the N-terminus, the 160-residue chain is Ribosomal RNA large subunit methyltransferase H (160 aa).

S-adenosyl-L-methionine contacts are provided by residues leucine 77, glycine 109, and 128-133 (FSRLTF).

This sequence belongs to the RNA methyltransferase RlmH family. Homodimer.

The protein resides in the cytoplasm. It carries out the reaction pseudouridine(1915) in 23S rRNA + S-adenosyl-L-methionine = N(3)-methylpseudouridine(1915) in 23S rRNA + S-adenosyl-L-homocysteine + H(+). In terms of biological role, specifically methylates the pseudouridine at position 1915 (m3Psi1915) in 23S rRNA. This is Ribosomal RNA large subunit methyltransferase H from Desulfitobacterium hafniense (strain DSM 10664 / DCB-2).